Reading from the N-terminus, the 467-residue chain is Venom serine carboxypeptidase (467 aa).

The signal sequence occupies residues 1–18; it reads MKKLVLLQFLFFISFARG. 2 N-linked (GlcNAc...) asparagine glycosylation sites follow: Asn-130 and Asn-169. The active site involves Ser-202. 3 N-linked (GlcNAc...) asparagine glycosylation sites follow: Asn-304, Asn-322, and Asn-344. Active-site residues include Asp-387 and His-444.

The protein belongs to the peptidase S10 family. As to expression, expressed by the venom duct.

The protein localises to the secreted. The catalysed reaction is Release of a C-terminal amino acid with broad specificity.. This chain is Venom serine carboxypeptidase, found in Apis mellifera (Honeybee).